Reading from the N-terminus, the 593-residue chain is Arginine--tRNA ligase (593 aa).

Residues 138 to 148 (ANPTGPLHVGH) carry the 'HIGH' region motif.

It belongs to the class-I aminoacyl-tRNA synthetase family. In terms of assembly, monomer.

The protein localises to the cytoplasm. The enzyme catalyses tRNA(Arg) + L-arginine + ATP = L-arginyl-tRNA(Arg) + AMP + diphosphate. The chain is Arginine--tRNA ligase from Burkholderia lata (strain ATCC 17760 / DSM 23089 / LMG 22485 / NCIMB 9086 / R18194 / 383).